We begin with the raw amino-acid sequence, 254 residues long: Pyridoxine 5'-phosphate synthase (254 aa).

Position 12 (N12) interacts with 3-amino-2-oxopropyl phosphate. 14–15 (DH) contacts 1-deoxy-D-xylulose 5-phosphate. R23 is a binding site for 3-amino-2-oxopropyl phosphate. H48 (proton acceptor) is an active-site residue. 2 residues coordinate 1-deoxy-D-xylulose 5-phosphate: R50 and H55. E75 acts as the Proton acceptor in catalysis. T105 lines the 1-deoxy-D-xylulose 5-phosphate pocket. H199 acts as the Proton donor in catalysis. 3-amino-2-oxopropyl phosphate is bound by residues G200 and 221 to 222 (GF).

Belongs to the PNP synthase family. Homooctamer; tetramer of dimers.

It localises to the cytoplasm. The enzyme catalyses 3-amino-2-oxopropyl phosphate + 1-deoxy-D-xylulose 5-phosphate = pyridoxine 5'-phosphate + phosphate + 2 H2O + H(+). The protein operates within cofactor biosynthesis; pyridoxine 5'-phosphate biosynthesis; pyridoxine 5'-phosphate from D-erythrose 4-phosphate: step 5/5. Its function is as follows. Catalyzes the complicated ring closure reaction between the two acyclic compounds 1-deoxy-D-xylulose-5-phosphate (DXP) and 3-amino-2-oxopropyl phosphate (1-amino-acetone-3-phosphate or AAP) to form pyridoxine 5'-phosphate (PNP) and inorganic phosphate. The sequence is that of Pyridoxine 5'-phosphate synthase from Rhodopseudomonas palustris (strain HaA2).